Reading from the N-terminus, the 331-residue chain is Glycerol-3-phosphate dehydrogenase [NAD(P)+] (331 aa).

The NADPH site is built by Trp-14, Arg-34, and Lys-107. Positions 107, 135, and 137 each coordinate sn-glycerol 3-phosphate. An NADPH-binding site is contributed by Ala-139. Sn-glycerol 3-phosphate-binding residues include Lys-190, Asp-243, Ser-253, Arg-254, and Asn-255. Catalysis depends on Lys-190, which acts as the Proton acceptor. An NADPH-binding site is contributed by Arg-254. Residues Val-278 and Glu-280 each coordinate NADPH.

It belongs to the NAD-dependent glycerol-3-phosphate dehydrogenase family.

Its subcellular location is the cytoplasm. The enzyme catalyses sn-glycerol 3-phosphate + NAD(+) = dihydroxyacetone phosphate + NADH + H(+). The catalysed reaction is sn-glycerol 3-phosphate + NADP(+) = dihydroxyacetone phosphate + NADPH + H(+). Its pathway is membrane lipid metabolism; glycerophospholipid metabolism. In terms of biological role, catalyzes the reduction of the glycolytic intermediate dihydroxyacetone phosphate (DHAP) to sn-glycerol 3-phosphate (G3P), the key precursor for phospholipid synthesis. The chain is Glycerol-3-phosphate dehydrogenase [NAD(P)+] from Caulobacter vibrioides (strain ATCC 19089 / CIP 103742 / CB 15) (Caulobacter crescentus).